The sequence spans 519 residues: Phosphate acetyltransferase (519 aa).

The interval 196–519 (AFQRSLEKKA…LISAIQAQDY (324 aa)) is phosphate acetyltransferase.

The protein in the N-terminal section; belongs to the CobB/CobQ family. This sequence in the C-terminal section; belongs to the phosphate acetyltransferase and butyryltransferase family.

Its subcellular location is the cytoplasm. The catalysed reaction is acetyl-CoA + phosphate = acetyl phosphate + CoA. It functions in the pathway metabolic intermediate biosynthesis; acetyl-CoA biosynthesis; acetyl-CoA from acetate: step 2/2. This chain is Phosphate acetyltransferase (pta), found in Helicobacter pylori (strain J99 / ATCC 700824) (Campylobacter pylori J99).